A 372-amino-acid polypeptide reads, in one-letter code: MGKAASAKKVLERVPISKPPFEYNDLKKAVPPHCFSRPLSRSLYFLFHDIIVTCILFYVASNYIHMLPRFLSCIVWPVYWISQGVFLGRLWMIGHECGHHSFSNYRWVDDTVGFLIHTATLTPYFSFKYSHRNHHAHTNSMEYDEVHIPKRKSEALYFEFLGNNPIGLMITMLCKLTFGYAAYIMFNYTGKKHKSGGLASHFYPQSPLFNDSERNHVLFSDIGICIVLYACYRIVTVTGAMPAFYVYGIPWVIMSAILFAATYLQHTHPSIPHYDTTEWNWLRGALSTIDRDLGFFNMNKTHYHVIHHLFPVIPEYHAQEATEAIKPILGQYYKYDGTPFLKALWREMKECIYVESDEGQKKQGIYWFKNKT.

2 helical membrane-spanning segments follow: residues 44–64 (YFLF…SNYI) and 74–94 (IVWP…WMIG). Residues 95 to 99 (HECGH) carry the Histidine box-1 motif. Residues 131-135 (HRNHH) carry the Histidine box-2 motif. Helical transmembrane passes span 166 to 186 (IGLM…YIMF), 217 to 237 (VLFS…IVTV), and 240 to 260 (AMPA…ILFA). The short motif at 304 to 308 (HVIHH) is the Histidine box-3 element.

Belongs to the fatty acid desaturase type 1 family. As to expression, expressed exclusively in the developing seeds. Not detected in leaves.

It is found in the microsome membrane. The catalysed reaction is a (9Z,12Z)-octadecadienoyl-containing glycerolipid + AH2 + O2 = a (8E,10E,12Z)-octadecatrienoyl-containing glycerolipid + A + 2 H2O. It functions in the pathway lipid metabolism; polyunsaturated fatty acid biosynthesis. Its function is as follows. Fatty acid conjugase converting 18:2(9Z, 12Z) to calendic acid 18:3(8E, 10E, 12Z). Converts alpha-linolenic acid (18:3(9Z, 12Z, 15Z)) into 18:4(8E, 10E, 12Z, 15Z). Also has weak activity on the mono-unsaturates 16:1(9Z) and 18:1(9Z) producing two conjugated double bonds at delta(8) and delta(10) position. The protein is Fatty acid conjugase FAC2 B of Calendula officinalis (Pot marigold).